The following is a 116-amino-acid chain: UPF0342 protein BH1149 (116 aa).

This sequence belongs to the UPF0342 family.

The sequence is that of UPF0342 protein BH1149 from Halalkalibacterium halodurans (strain ATCC BAA-125 / DSM 18197 / FERM 7344 / JCM 9153 / C-125) (Bacillus halodurans).